Here is a 406-residue protein sequence, read N- to C-terminus: Multifunctional CCA protein (406 aa).

ATP-binding residues include G8 and R11. Positions 8 and 11 each coordinate CTP. Mg(2+)-binding residues include D21 and D23. ATP-binding residues include R91, R137, and R140. R91, R137, and R140 together coordinate CTP. The HD domain maps to 228–329 (TGIHTLMVAE…IKILNKFDVW (102 aa)).

The protein belongs to the tRNA nucleotidyltransferase/poly(A) polymerase family. Bacterial CCA-adding enzyme type 1 subfamily. As to quaternary structure, monomer. Can also form homodimers and oligomers. Requires Mg(2+) as cofactor. The cofactor is Ni(2+).

It carries out the reaction a tRNA precursor + 2 CTP + ATP = a tRNA with a 3' CCA end + 3 diphosphate. The enzyme catalyses a tRNA with a 3' CCA end + 2 CTP + ATP = a tRNA with a 3' CCACCA end + 3 diphosphate. Catalyzes the addition and repair of the essential 3'-terminal CCA sequence in tRNAs without using a nucleic acid template. Adds these three nucleotides in the order of C, C, and A to the tRNA nucleotide-73, using CTP and ATP as substrates and producing inorganic pyrophosphate. tRNA 3'-terminal CCA addition is required both for tRNA processing and repair. Also involved in tRNA surveillance by mediating tandem CCA addition to generate a CCACCA at the 3' terminus of unstable tRNAs. While stable tRNAs receive only 3'-terminal CCA, unstable tRNAs are marked with CCACCA and rapidly degraded. The protein is Multifunctional CCA protein of Vibrio parahaemolyticus serotype O3:K6 (strain RIMD 2210633).